A 237-amino-acid chain; its full sequence is Ig heavy chain Mem5 (237 aa).

Ig-like domains are found at residues 1-119 (EVKL…LTVS) and 126-218 (PSVY…KKIE). Cys-22 and Cys-98 form a disulfide bridge. Residues 101-105 (VDYGT) form a d segment region. The interval 106–120 (NYDYWGQGTTLTVSS) is JH2 segment. Cys-147 and Cys-202 are joined by a disulfide.

The protein resides in the secreted. Its function is as follows. Anti-influenza H3N2 neuraminidase antibody. The sequence is that of Ig heavy chain Mem5 from Mus musculus (Mouse).